We begin with the raw amino-acid sequence, 629 residues long: tRNA uridine 5-carboxymethylaminomethyl modification enzyme MnmG (629 aa).

FAD is bound by residues 13 to 18, Val-125, and Ser-180; that span reads GGGHAG. NAD(+) is bound at residue 273–287; sequence GPRYCPSIEDKVMRF. Residue Gln-370 coordinates FAD.

Belongs to the MnmG family. Homodimer. Heterotetramer of two MnmE and two MnmG subunits. The cofactor is FAD.

The protein localises to the cytoplasm. Functionally, NAD-binding protein involved in the addition of a carboxymethylaminomethyl (cmnm) group at the wobble position (U34) of certain tRNAs, forming tRNA-cmnm(5)s(2)U34. This chain is tRNA uridine 5-carboxymethylaminomethyl modification enzyme MnmG, found in Escherichia coli O127:H6 (strain E2348/69 / EPEC).